A 588-amino-acid chain; its full sequence is Putative ABC transporter ATP-binding protein PAM_020 (588 aa).

2 ABC transporter domains span residues 6-247 (IIFK…GIQE) and 317-551 (LQLQ…TSLN). Residues 40-47 (GKNGSGKS) and 351-358 (GKNGSGKS) contribute to the ATP site.

Belongs to the ABC transporter superfamily.

The protein localises to the cell membrane. Functionally, probably part of an ABC transporter complex. Responsible for energy coupling to the transport system. This Onion yellows phytoplasma (strain OY-M) protein is Putative ABC transporter ATP-binding protein PAM_020.